A 243-amino-acid chain; its full sequence is Ribonuclease PH (243 aa).

Residues arginine 91 and 129–131 each bind phosphate; that span reads GTR.

It belongs to the RNase PH family. In terms of assembly, homohexameric ring arranged as a trimer of dimers.

The enzyme catalyses tRNA(n+1) + phosphate = tRNA(n) + a ribonucleoside 5'-diphosphate. Phosphorolytic 3'-5' exoribonuclease that plays an important role in tRNA 3'-end maturation. Removes nucleotide residues following the 3'-CCA terminus of tRNAs; can also add nucleotides to the ends of RNA molecules by using nucleoside diphosphates as substrates, but this may not be physiologically important. Probably plays a role in initiation of 16S rRNA degradation (leading to ribosome degradation) during starvation. In Burkholderia pseudomallei (strain 668), this protein is Ribonuclease PH.